We begin with the raw amino-acid sequence, 658 residues long: Deoxynucleoside triphosphate triphosphohydrolase SAMHD1 (658 aa).

A disordered region spans residues 23 to 68 (SQPRVSEVAMQSAPLEQPAKRPRCDGSPRTPPSTPPATANLSADDD). S49 carries the phosphoserine modification. A Phosphothreonine modification is found at T52. Residue S55 is modified to Phosphoserine. T56 is modified (phosphothreonine). Residues S64 and S125 each carry the phosphoserine modification. Residues 77–142 (WEPEDVCSFL…IECIQQLSQS (66 aa)) form the SAM domain. GTP is bound by residues K148 and V149. N151 serves as a coordination point for dGTP. 3 residues coordinate GTP: D169, Q174, and R177. DGTP is bound by residues L182 and V188. The 153-residue stretch at 196–348 (RFEHSLGVGY…GIDVDKWDYF (153 aa)) folds into the HD domain. Residues H199, H238, and D239 each contribute to the Mn(2+) site. Positions 239, 247, 265, and 266 each coordinate dGTP. Residue H265 is part of the active site. A Mn(2+)-binding site is contributed by D343. DGTP-binding residues include Y347, D351, R365, R395, K397, N401, Y417, H419, and K420. GTP is bound by residues R494 and K498. A Glycyl lysine isopeptide (Lys-Gly) (interchain with G-Cter in SUMO2) cross-link involves residue K509. K565 lines the GTP pocket. Position 565 (K565) interacts with dGTP. T634 is modified (phosphothreonine). Position 634 is a (Microbial infection) Phosphothreonine (T634).

This sequence belongs to the SAMHD1 family. Homodimer; in absence of GTP and dNTP. Homotetramer; in GTP- and dNTP-bound form. Interacts with MRE11; leading to stimulate the exonuclease activity of MRE11. Interacts with RBBP8/CtIP. Interacts with RBBP8/CtIP. Interacts (via its C-terminus) with CD81. Zn(2+) is required as a cofactor. Phosphorylation at Thr-634 by CDK1 acts as a switch to control deoxynucleoside triphosphate (dNTPase)-dependent and -independent functions. Phosphorylation at Thr-634 takes place in cycling cells: it reduces the stability of the homotetramer, impairing the dNTPase activity and subsequent ability to restrict infection by viruses. It also inhibits ability to suppress LINE-1 retrotransposon activity. In contrast, phosphorylation at Thr-634 promotes DNA end resection at stalled replication forks in response to DNA damage. In terms of processing, (Microbial infection) Phosphorylation at Thr-634 by mouse cytomegalovirus kinase M97 leads to a reduced level of dNTP hydrolase activity and the loss of viral restriction. Post-translationally, not phosphorylated by CDK1 at the C-terminus.

The protein resides in the nucleus. Its subcellular location is the chromosome. It catalyses the reaction a 2'-deoxyribonucleoside 5'-triphosphate + H2O = a 2'-deoxyribonucleoside + triphosphate + H(+). It carries out the reaction dATP + H2O = 2'-deoxyadenosine + triphosphate + H(+). The enzyme catalyses dCTP + H2O = 2'-deoxycytidine + triphosphate + H(+). The catalysed reaction is dGTP + H2O = 2'-deoxyguanosine + triphosphate + H(+). It catalyses the reaction dTTP + H2O = thymidine + triphosphate + H(+). Allosterically activated and regulated via the combined actions of GTP and dNTPs (dATP, dGTP, dTTP and dCTP): Allosteric site 1 binds GTP, while allosteric site 2 binds dNTP. Allosteric activation promotes the formation of highly active homotetramers. Isoform 1: Phosphorylation at Thr-634 impairs homotetramerization, thereby inhibiting dNTPase activity, leading to reduced ability to restrict infection by viruses. Its function is as follows. Protein that acts both as a host restriction factor involved in defense response to virus and as a regulator of DNA end resection at stalled replication forks. Has deoxynucleoside triphosphate (dNTPase) activity, which is required to restrict infection by viruses: dNTPase activity reduces cellular dNTP levels to levels too low for retroviral reverse transcription to occur, blocking early-stage virus replication in dendritic and other myeloid cells. Likewise, suppresses LINE-1 retrotransposon activity. In addition to virus restriction, dNTPase activity acts as a regulator of DNA precursor pools by regulating dNTP pools. Phosphorylation at Thr-634 acts as a switch to control dNTPase-dependent and -independent functions: it inhibits dNTPase activity and ability to restrict infection by viruses, while it promotes DNA end resection at stalled replication forks. Functions during S phase at stalled DNA replication forks to promote the resection of gapped or reversed forks: acts by stimulating the exonuclease activity of MRE11, activating the ATR-CHK1 pathway and allowing the forks to restart replication. Its ability to promote degradation of nascent DNA at stalled replication forks is required to prevent induction of type I interferons, thereby preventing chronic inflammation. Ability to promote DNA end resection at stalled replication forks is independent of dNTPase activity. Enhances immunoglobulin hypermutation in B-lymphocytes by promoting transversion mutation. In Mus musculus (Mouse), this protein is Deoxynucleoside triphosphate triphosphohydrolase SAMHD1.